An 81-amino-acid polypeptide reads, in one-letter code: Exodeoxyribonuclease 7 small subunit (81 aa).

The segment covering 60–70 has biased composition (basic and acidic residues); sequence LVDKDGNEKAL. The interval 60-81 is disordered; that stretch reads LVDKDGNEKALDPQNASAPEEE.

Belongs to the XseB family. As to quaternary structure, heterooligomer composed of large and small subunits.

The protein resides in the cytoplasm. The catalysed reaction is Exonucleolytic cleavage in either 5'- to 3'- or 3'- to 5'-direction to yield nucleoside 5'-phosphates.. Its function is as follows. Bidirectionally degrades single-stranded DNA into large acid-insoluble oligonucleotides, which are then degraded further into small acid-soluble oligonucleotides. The polypeptide is Exodeoxyribonuclease 7 small subunit (Lactobacillus johnsonii (strain CNCM I-12250 / La1 / NCC 533)).